The chain runs to 431 residues: 4-hydroxy-3-methylbut-2-en-1-yl diphosphate synthase (flavodoxin) (431 aa).

The span at Met1–Val12 shows a compositional bias: basic and acidic residues. Residues Met1–Gln20 are disordered. 4 residues coordinate [4Fe-4S] cluster: Cys310, Cys313, Cys356, and Glu363.

It belongs to the IspG family. [4Fe-4S] cluster is required as a cofactor.

The catalysed reaction is (2E)-4-hydroxy-3-methylbut-2-enyl diphosphate + oxidized [flavodoxin] + H2O + 2 H(+) = 2-C-methyl-D-erythritol 2,4-cyclic diphosphate + reduced [flavodoxin]. Its pathway is isoprenoid biosynthesis; isopentenyl diphosphate biosynthesis via DXP pathway; isopentenyl diphosphate from 1-deoxy-D-xylulose 5-phosphate: step 5/6. Functionally, converts 2C-methyl-D-erythritol 2,4-cyclodiphosphate (ME-2,4cPP) into 1-hydroxy-2-methyl-2-(E)-butenyl 4-diphosphate. This is 4-hydroxy-3-methylbut-2-en-1-yl diphosphate synthase (flavodoxin) from Rhodopseudomonas palustris (strain TIE-1).